The primary structure comprises 140 residues: uncharacterized protein (140 aa).

This is an uncharacterized protein from Sinorhizobium fredii (strain NBRC 101917 / NGR234).